The following is a 234-amino-acid chain: UPF0502 protein BPSS1373 (234 aa).

Belongs to the UPF0502 family.

The sequence is that of UPF0502 protein BPSS1373 from Burkholderia pseudomallei (strain K96243).